The chain runs to 162 residues: Small ribosomal subunit protein uS12m (162 aa).

The N-terminal 37 residues, Met1–Leu37, are a transit peptide targeting the mitochondrion.

It belongs to the universal ribosomal protein uS12 family. As to quaternary structure, component of the mitochondrial small ribosomal subunit (mt-SSU). Mature yeast 74S mitochondrial ribosomes consist of a small (37S) and a large (54S) subunit. The 37S small subunit contains a 15S ribosomal RNA (15S mt-rRNA) and at least 32 different proteins. The 54S large subunit contains a 21S rRNA (21S mt-rRNA) and at least 45 different proteins. uS12m forms part of the decoding center of the mt-SSU.

Its subcellular location is the mitochondrion. Functionally, component of the mitochondrial ribosome (mitoribosome), a dedicated translation machinery responsible for the synthesis of mitochondrial genome-encoded proteins, including at least some of the essential transmembrane subunits of the mitochondrial respiratory chain. The mitoribosomes are attached to the mitochondrial inner membrane and translation products are cotranslationally integrated into the membrane. uS12m is required for respiratory growth. The chain is Small ribosomal subunit protein uS12m from Schizosaccharomyces pombe (strain 972 / ATCC 24843) (Fission yeast).